The chain runs to 889 residues: MPTAKRTSSRASLALPFQLRLVHKKSWGHRLRDFISGFLKSCRPIAKYVFPNFIVVHYIYLITLSIIGSILLYPCKNTAFIDVLFLAAGASTQGGLATKSTNDFNLYQQIVVYVITLLSTPILIHGFLAFVRLYWFERYFDNIRDISKQNFKLRRTMTLQQRELSGSSGNAARSRSFKDNLFRGKFVSREDPRQSASDVPMDSPDTSALSSISPLNVSSSKEESSDTQSSPPNFSSKRQPSDVDPRDIYKSIMMLQKQQEKSNANSTDSFSSETNGPAFIVQERHERRAPHCSLKRHSVLPSSQELNKLAQTKSFQKLLGLRRDEGDHDYFDGAPHKYMVTKKKKISRTQSCNIPTYTASPSPKTSGQVVENHRNLAKSAPSSFVDEEMSFSPQESLNLQFQAHPPKPKRREGDIGHPFTRTMSTNYLSWQPTFGRNSVFIGLTKQQKEELGGVEYRALRLLCCILMVYYIGFNILAFVTIVPWACTRHHYSEIIRRNGVSPTWWGFFTAMSAFSNLGLSLTADSMVSFDTAPYPLIFMMFFIIIGNTGFPIMLRFIIWIMFKTSRDLSQFKESLGFLLDHPRRCFTLLFPSGPTWWLFTTLVVLNATDWILFIILDFNSAVVRQVAKGYRALMGLFQSVCTRTAGFNVVDLSKLHPSIQVSYMLMMYVSVLPLAISIRRTNVYEEQSLGLYDSGQDDENITHEDDIKETDHDGESEERDTVSTKSKPKKQSPKSFVGAHLRRQLSFDLWYLFLGLFIICICEGRKIEDVNKPDFNVFAILFEVVSAYGTVGLSLGYPNTNTSLSAQFTVLSKLVIIAMLIRGRNRGLPYTLDRAIMLPSDKLEQIDRLQDMKAKGKLLAKVGEDPMTTYVKKRSHKLKKIATKFWGKH.

The Cytoplasmic portion of the chain corresponds to 1–51 (MPTAKRTSSRASLALPFQLRLVHKKSWGHRLRDFISGFLKSCRPIAKYVFP). The chain crosses the membrane as a helical span at residues 52–73 (NFIVVHYIYLITLSIIGSILLY). The Extracellular portion of the chain corresponds to 74-80 (PCKNTAF). Residues 81 to 101 (IDVLFLAAGASTQGGLATKST) traverse the membrane as a helical segment. The Cytoplasmic segment spans residues 102-109 (NDFNLYQQ). Residues 110-130 (IVVYVITLLSTPILIHGFLAF) traverse the membrane as a helical segment. The Extracellular segment spans residues 131–464 (VRLYWFERYF…EYRALRLLCC (334 aa)). The segment at 189–244 (REDPRQSASDVPMDSPDTSALSSISPLNVSSSKEESSDTQSSPPNFSSKRQPSDVD) is disordered. The span at 207-219 (SALSSISPLNVSS) shows a compositional bias: low complexity. N-linked (GlcNAc...) asparagine glycosylation is found at Asn216, Asn233, and Asn265. Residues 465–487 (ILMVYYIGFNILAFVTIVPWACT) form a helical membrane-spanning segment. Residues 488–499 (RHHYSEIIRRNG) are Cytoplasmic-facing. Residues 500-521 (VSPTWWGFFTAMSAFSNLGLSL) form a helical membrane-spanning segment. Residues 522–524 (TAD) lie on the Extracellular side of the membrane. The chain crosses the membrane as a helical span at residues 525 to 545 (SMVSFDTAPYPLIFMMFFIII). Topologically, residues 546–548 (GNT) are cytoplasmic. A helical membrane pass occupies residues 549–569 (GFPIMLRFIIWIMFKTSRDLS). Over 570–584 (QFKESLGFLLDHPRR) the chain is Extracellular. Residues 585-605 (CFTLLFPSGPTWWLFTTLVVL) form a helical membrane-spanning segment. Residues 606 to 609 (NATD) are Cytoplasmic-facing. The helical transmembrane segment at 610–630 (WILFIILDFNSAVVRQVAKGY) threads the bilayer. The Extracellular portion of the chain corresponds to 631 to 657 (RALMGLFQSVCTRTAGFNVVDLSKLHP). Residues 658 to 678 (SIQVSYMLMMYVSVLPLAISI) form a helical membrane-spanning segment. Over 679 to 743 (RRTNVYEEQS…KSFVGAHLRR (65 aa)) the chain is Cytoplasmic. The segment at 705-733 (DDIKETDHDGESEERDTVSTKSKPKKQSP) is disordered. The helical transmembrane segment at 744 to 764 (QLSFDLWYLFLGLFIICICEG) threads the bilayer. Over 765 to 776 (RKIEDVNKPDFN) the chain is Extracellular. A helical membrane pass occupies residues 777–797 (VFAILFEVVSAYGTVGLSLGY). Residues 798 to 889 (PNTNTSLSAQ…KIATKFWGKH (92 aa)) lie on the Cytoplasmic side of the membrane.

The protein belongs to the TrkH potassium transport family.

It localises to the membrane. Functionally, this protein is required for low-affinity potassium transport. The chain is Low-affinity potassium transport protein (TRK2) from Saccharomyces cerevisiae (strain ATCC 204508 / S288c) (Baker's yeast).